The chain runs to 180 residues: Acireductone dioxygenase (180 aa).

Fe(2+) contacts are provided by histidine 97, histidine 99, glutamate 103, and histidine 141. Ni(2+)-binding residues include histidine 97, histidine 99, glutamate 103, and histidine 141.

It belongs to the acireductone dioxygenase (ARD) family. As to quaternary structure, monomer. Fe(2+) serves as cofactor. Ni(2+) is required as a cofactor.

It carries out the reaction 1,2-dihydroxy-5-(methylsulfanyl)pent-1-en-3-one + O2 = 3-(methylsulfanyl)propanoate + CO + formate + 2 H(+). The catalysed reaction is 1,2-dihydroxy-5-(methylsulfanyl)pent-1-en-3-one + O2 = 4-methylsulfanyl-2-oxobutanoate + formate + 2 H(+). Its pathway is amino-acid biosynthesis; L-methionine biosynthesis via salvage pathway; L-methionine from S-methyl-5-thio-alpha-D-ribose 1-phosphate: step 5/6. Its function is as follows. Catalyzes 2 different reactions between oxygen and the acireductone 1,2-dihydroxy-3-keto-5-methylthiopentene (DHK-MTPene) depending upon the metal bound in the active site. Fe-containing acireductone dioxygenase (Fe-ARD) produces formate and 2-keto-4-methylthiobutyrate (KMTB), the alpha-ketoacid precursor of methionine in the methionine recycle pathway. Ni-containing acireductone dioxygenase (Ni-ARD) produces methylthiopropionate, carbon monoxide and formate, and does not lie on the methionine recycle pathway. This chain is Acireductone dioxygenase, found in Yersinia pseudotuberculosis serotype O:3 (strain YPIII).